We begin with the raw amino-acid sequence, 642 residues long: Threonine--tRNA ligase (642 aa).

A TGS domain is found at 1-61 (MPIITLPDGS…TADSELAIIT (61 aa)). The segment at 243–534 (DHRKIGKQLD…LIEEYAGKFP (292 aa)) is catalytic. Cys-334, His-385, and His-511 together coordinate Zn(2+).

Belongs to the class-II aminoacyl-tRNA synthetase family. As to quaternary structure, homodimer. The cofactor is Zn(2+).

Its subcellular location is the cytoplasm. The enzyme catalyses tRNA(Thr) + L-threonine + ATP = L-threonyl-tRNA(Thr) + AMP + diphosphate + H(+). In terms of biological role, catalyzes the attachment of threonine to tRNA(Thr) in a two-step reaction: L-threonine is first activated by ATP to form Thr-AMP and then transferred to the acceptor end of tRNA(Thr). Also edits incorrectly charged L-seryl-tRNA(Thr). This is Threonine--tRNA ligase from Shewanella frigidimarina (strain NCIMB 400).